The primary structure comprises 464 residues: tRNA modification GTPase MnmE (464 aa).

(6S)-5-formyl-5,6,7,8-tetrahydrofolate contacts are provided by arginine 27, glutamate 90, and lysine 129. Residues 222–384 enclose the TrmE-type G domain; sequence GIALVLAGSV…LYDKIRSLTC (163 aa). GTP-binding positions include 232-237, 251-257, and 276-279; these read NVGKSS, SSYAGTT, and DTAG. Serine 236 and threonine 257 together coordinate Mg(2+). A (6S)-5-formyl-5,6,7,8-tetrahydrofolate-binding site is contributed by lysine 464.

This sequence belongs to the TRAFAC class TrmE-Era-EngA-EngB-Septin-like GTPase superfamily. TrmE GTPase family. Homodimer. Heterotetramer of two MnmE and two MnmG subunits. The cofactor is K(+).

The protein resides in the cytoplasm. Functionally, exhibits a very high intrinsic GTPase hydrolysis rate. Involved in the addition of a carboxymethylaminomethyl (cmnm) group at the wobble position (U34) of certain tRNAs, forming tRNA-cmnm(5)s(2)U34. This chain is tRNA modification GTPase MnmE, found in Borrelia turicatae (strain 91E135).